Consider the following 415-residue polypeptide: DNA polymerase IV (415 aa).

Positions 15 to 196 (ILHVDMNCFF…LPVGAMHGIG (182 aa)) constitute a UmuC domain. Residues Asp19 and Asp115 each coordinate Mg(2+). Glu116 is an active-site residue. The tract at residues 238 to 260 (KGMDDRQVDPSQMGQHKSVGNSM) is disordered. Positions 246-260 (DPSQMGQHKSVGNSM) are enriched in polar residues.

The protein belongs to the DNA polymerase type-Y family. In terms of assembly, monomer. It depends on Mg(2+) as a cofactor.

The protein localises to the cytoplasm. The enzyme catalyses DNA(n) + a 2'-deoxyribonucleoside 5'-triphosphate = DNA(n+1) + diphosphate. Its function is as follows. Poorly processive, error-prone DNA polymerase involved in untargeted mutagenesis. Copies undamaged DNA at stalled replication forks, which arise in vivo from mismatched or misaligned primer ends. These misaligned primers can be extended by PolIV. Exhibits no 3'-5' exonuclease (proofreading) activity. May be involved in translesional synthesis, in conjunction with the beta clamp from PolIII. This Bacillus cereus (strain ZK / E33L) protein is DNA polymerase IV.